The following is a 236-amino-acid chain: N-acetyl-alpha-D-glucosaminyl L-malate deacetylase 1 (236 aa).

3 residues coordinate Zn(2+): His-12, Asp-15, and His-113.

Belongs to the PIGL family. Requires Zn(2+) as cofactor.

The enzyme catalyses (S)-malyl N-acetyl-alpha-D-glucosaminide + H2O = (S)-malyl alpha-D-glucosaminide + acetate. Its function is as follows. Involved in bacillithiol (BSH) biosynthesis. Catalyzes the second step of the pathway, the deacetylation of N-acetylglucosaminylmalate (GlcNAc-Mal) to glucosamine malate (GlcN-Mal). This is N-acetyl-alpha-D-glucosaminyl L-malate deacetylase 1 from Bacillus subtilis (strain 168).